We begin with the raw amino-acid sequence, 476 residues long: uncharacterized protein (476 aa).

Helical transmembrane passes span 4–24 (FFSF…LFGA), 81–101 (ALAI…AAFI), 141–161 (WMGV…FSGV), 174–194 (FDFP…LAIT), 207–227 (FVPL…VMNI), 233–253 (VIWS…GAAG), 300–320 (MIGI…LILL), 351–371 (FVTL…YIYA), 391–411 (ICTF…MWQL), and 414–434 (IIMA…SPVV).

This sequence belongs to the alanine or glycine:cation symporter (AGCS) (TC 2.A.25) family.

It is found in the cell inner membrane. This is an uncharacterized protein from Escherichia coli (strain K12).